We begin with the raw amino-acid sequence, 61 residues long: DNA-directed RNA polymerase subunit Rpo6 (61 aa).

The protein belongs to the archaeal Rpo6/eukaryotic RPB6 RNA polymerase subunit family. Part of the RNA polymerase complex.

It is found in the cytoplasm. It carries out the reaction RNA(n) + a ribonucleoside 5'-triphosphate = RNA(n+1) + diphosphate. In terms of biological role, DNA-dependent RNA polymerase (RNAP) catalyzes the transcription of DNA into RNA using the four ribonucleoside triphosphates as substrates. The protein is DNA-directed RNA polymerase subunit Rpo6 of Thermoplasma acidophilum (strain ATCC 25905 / DSM 1728 / JCM 9062 / NBRC 15155 / AMRC-C165).